A 233-amino-acid polypeptide reads, in one-letter code: Transcriptional regulatory protein NatR (233 aa).

Residues 3 to 117 (KVGLVDDYRV…RLAASFDRYL (115 aa)) enclose the Response regulatory domain. Asp54 carries the post-translational modification 4-aspartylphosphate. In terms of domain architecture, HTH LytTR-type spans 129 to 233 (ILIKQKSEMH…QLDYFQNYYF (105 aa)).

Phosphorylated by NatK.

The protein resides in the cytoplasm. Member of the two-component regulatory system NatK/NatR that positively regulates the expression of the natAB operon. Acts by binding directly to the promoter of natAB. The sequence is that of Transcriptional regulatory protein NatR from Bacillus subtilis (strain 168).